Reading from the N-terminus, the 568-residue chain is Phenylalanine--tRNA ligase beta subunit (568 aa).

A B5 domain is found at 278–353 (LTPKSFEVEL…IAYGYNEIEP (76 aa)). The Mg(2+) site is built by Asp331, Asp337, Glu340, and Asp341.

It belongs to the phenylalanyl-tRNA synthetase beta subunit family. Type 2 subfamily. Tetramer of two alpha and two beta subunits. Mg(2+) is required as a cofactor.

Its subcellular location is the cytoplasm. The enzyme catalyses tRNA(Phe) + L-phenylalanine + ATP = L-phenylalanyl-tRNA(Phe) + AMP + diphosphate + H(+). The sequence is that of Phenylalanine--tRNA ligase beta subunit from Thermococcus gammatolerans (strain DSM 15229 / JCM 11827 / EJ3).